We begin with the raw amino-acid sequence, 428 residues long: MAGAASALFLLDIKGRVLVWRDYRGDVTAAQAERFFTKLIETEGDSQSNDPVAYDNGVTYMFVQHSNIYLMIASRQNCNAASLLFFLHRVVDVFKHYFEELEEESLRDNFVVVYELLDEMMDFGYPQFTEARILSEFIKTDAYRMEVTQRPPMAVTNSVSWRSEGLKFKKNEVFLDVIESVNILVNSNGQIVRSDVVGALKMRTYLSGMPECKLGLNDRILLEAQGRAIKGKAIDLEDIKFHQCVRLARFENDRTISFIPPDGSFDLMTYRLSTQVKPLIWVEAHIERHSRSRVEMLVKARSQFKDRSYATSVEIELPVPTDAYNPDVRTSLGSAAYAPEKDALVWKIQYFYGNKEHTLKADFHLPSIAAEEATPERKAPIRVKFEIPKFIVSGIQVRYLKIIEKSGYQAHPWVRYITMAGEYELRLM.

The MHD domain maps to 170–426 (KNEVFLDVIE…ITMAGEYELR (257 aa)).

Belongs to the adaptor complexes medium subunit family. In terms of assembly, adaptor protein complex 1 (AP-1) is a heterotetramer composed of two large adaptins (gamma-type subunit and beta-type subunit), a medium adaptin (mu-type subunit) and a small adaptin (sigma-type subunit).

The protein localises to the golgi apparatus. It localises to the cytoplasmic vesicle. The protein resides in the clathrin-coated vesicle membrane. Functionally, subunit of clathrin-associated adaptor protein complex 1 that plays a role in protein sorting at the trans-Golgi network and early endosomes (TGN/EE). The AP complexes mediate the recruitment of clathrin to membranes and the recognition of sorting signals within the cytosolic tails of transmembrane cargo molecules. Functions redundantly with AP1M2 in multiple post-Golgi trafficking pathways leading from the TGN to the vacuole, the plasma membrane, and the cell-division plane. This Arabidopsis thaliana (Mouse-ear cress) protein is AP-1 complex subunit mu-1 (AP1M1).